The following is a 347-amino-acid chain: Dihydroorotase (347 aa).

Positions 17 and 19 each coordinate Zn(2+). Substrate-binding positions include 19-21 (HLR) and asparagine 45. Zn(2+) contacts are provided by lysine 103, histidine 140, and histidine 178. Lysine 103 is modified (N6-carboxylysine). Histidine 140 is a binding site for substrate. Leucine 223 provides a ligand contact to substrate. Position 251 (aspartate 251) interacts with Zn(2+). Aspartate 251 is an active-site residue. 2 residues coordinate substrate: histidine 255 and alanine 267.

This sequence belongs to the metallo-dependent hydrolases superfamily. DHOase family. Class II DHOase subfamily. In terms of assembly, homodimer. It depends on Zn(2+) as a cofactor.

The enzyme catalyses (S)-dihydroorotate + H2O = N-carbamoyl-L-aspartate + H(+). The protein operates within pyrimidine metabolism; UMP biosynthesis via de novo pathway; (S)-dihydroorotate from bicarbonate: step 3/3. Its function is as follows. Catalyzes the reversible cyclization of carbamoyl aspartate to dihydroorotate. The chain is Dihydroorotase from Pectobacterium carotovorum subsp. carotovorum (strain PC1).